The sequence spans 91 residues: Small ribosomal subunit protein uS19 (91 aa).

Belongs to the universal ribosomal protein uS19 family.

Its function is as follows. Protein S19 forms a complex with S13 that binds strongly to the 16S ribosomal RNA. In Actinobacillus pleuropneumoniae serotype 7 (strain AP76), this protein is Small ribosomal subunit protein uS19.